A 288-amino-acid polypeptide reads, in one-letter code: Proteasome assembly chaperone 1 (288 aa).

The segment at 1–33 (MATFFGEVQSVFSRAVDEEEEDEDDDEEEEEDR) is disordered. Residues 17–33 (DEEEEDEDDDEEEEEDR) show a composition bias toward acidic residues.

It belongs to the PSMG1 family. In terms of assembly, forms a heterodimer with psmg2. Post-translationally, degraded by the proteasome upon completion of 20S proteasome maturation.

The protein resides in the cytoplasm. Its subcellular location is the endoplasmic reticulum. Functionally, chaperone protein which promotes assembly of the 20S proteasome as part of a heterodimer with psmg2. This is Proteasome assembly chaperone 1 from Xenopus laevis (African clawed frog).